The primary structure comprises 149 residues: Small ribosomal subunit protein uS17c (149 aa).

The N-terminal 49 residues, 1 to 49 (MITSSLTSSLQALKLSSPFAHGSTPLSSLSKPNSFPNHRMPALVPVIRA), are a transit peptide targeting the chloroplast.

This sequence belongs to the universal ribosomal protein uS17 family. In terms of assembly, part of the 30S ribosomal subunit.

It localises to the plastid. The protein resides in the chloroplast. In terms of biological role, one of the primary rRNA binding proteins, it binds specifically to the 5'-end of 16S ribosomal RNA. Required for optimal plastid performance in terms of photosynthesis and growth. Required for the translation of plastid mRNAs. Plays a critical role in biosynthesis of thylakoid membrane proteins encoded by chloroplast genes. In Arabidopsis thaliana (Mouse-ear cress), this protein is Small ribosomal subunit protein uS17c (RPS17).